Here is a 471-residue protein sequence, read N- to C-terminus: Pneumolysin (471 aa).

Beta stranded transmembrane passes span 158 to 171 (MEQL…DFEK), 178 to 187 (IDFNSVHSGE), 256 to 265 (SDEVEAAFEA), and 273 to 285 (APQT…LDNT). The Conserved undecapeptide signature appears at 427-437 (ECTGLAWEWWR). The Cholesterol binding signature appears at 459–460 (TL).

It belongs to the cholesterol-dependent cytolysin family. As to quaternary structure, homooligomeric pore complex of 35 to 50 subunits; when inserted in the host membrane. Has a slightly altered apparent molecular weight in a secA2 deletion mutant, but no post-translational modifications have been found.

Its subcellular location is the secreted. It is found in the cell wall. It localises to the host cell membrane. Its function is as follows. A cholesterol-dependent toxin that causes cytolysis by forming pores in cholesterol containing host membranes. After binding to target membranes, the protein undergoes a major conformation change, leading to its insertion in the host membrane and formation of an oligomeric pore complex. Cholesterol is required for binding to host membranes, membrane insertion and pore formation; cholesterol binding is mediated by a Thr-Leu pair in the C-terminus. Can be reversibly inactivated by oxidation. This chain is Pneumolysin (ply), found in Streptococcus pneumoniae serotype 4 (strain ATCC BAA-334 / TIGR4).